A 329-amino-acid chain; its full sequence is Ferredoxin--NAD(P)(+) reductase CarAd (329 aa).

Positions Tyr2–Asp92 constitute a 2Fe-2S ferredoxin-type domain. The [2Fe-2S] cluster site is built by Cys35, Cys40, Cys43, and Cys76. An FAD-binding FR-type domain is found at Ile100 to Arg200.

Monomer. Carbazole 1,9a-dioxygenase complex consists of a terminal oxygenase component CarAa, a ferredoxin reductase component CarAd and a ferredoxin component CarAc. It depends on [2Fe-2S] cluster as a cofactor. FAD serves as cofactor.

It catalyses the reaction 2 reduced [2Fe-2S]-[ferredoxin] + NAD(+) + H(+) = 2 oxidized [2Fe-2S]-[ferredoxin] + NADH. The enzyme catalyses 2 reduced [2Fe-2S]-[ferredoxin] + NADP(+) + H(+) = 2 oxidized [2Fe-2S]-[ferredoxin] + NADPH. Functionally, part of the multicomponent carbazole 1,9a-dioxygenase (CARDO), that converts carbazole (CAR) into 2-aminobiphenyl-2,3-diol. It can use both NAD and NADP as electron donors, but NAD is supposed to be the physiological electron donor. The chain is Ferredoxin--NAD(P)(+) reductase CarAd (carAd) from Metapseudomonas resinovorans (Pseudomonas resinovorans).